We begin with the raw amino-acid sequence, 213 residues long: High frequency lysogenization protein HflD homolog (213 aa).

Residues 79–126 adopt a coiled-coil conformation; that stretch reads QGLNAELTRYTLSLMVLERKLSSAKGALDTLGNRINGLQRQLEHFDLQ.

Belongs to the HflD family.

It is found in the cytoplasm. Its subcellular location is the cell inner membrane. In Shigella boydii serotype 18 (strain CDC 3083-94 / BS512), this protein is High frequency lysogenization protein HflD homolog.